The chain runs to 448 residues: Probable glycine dehydrogenase (decarboxylating) subunit 1 (448 aa).

It belongs to the GcvP family. N-terminal subunit subfamily. In terms of assembly, the glycine cleavage system is composed of four proteins: P, T, L and H. In this organism, the P 'protein' is a heterodimer of two subunits.

It carries out the reaction N(6)-[(R)-lipoyl]-L-lysyl-[glycine-cleavage complex H protein] + glycine + H(+) = N(6)-[(R)-S(8)-aminomethyldihydrolipoyl]-L-lysyl-[glycine-cleavage complex H protein] + CO2. Functionally, the glycine cleavage system catalyzes the degradation of glycine. The P protein binds the alpha-amino group of glycine through its pyridoxal phosphate cofactor; CO(2) is released and the remaining methylamine moiety is then transferred to the lipoamide cofactor of the H protein. The protein is Probable glycine dehydrogenase (decarboxylating) subunit 1 of Geobacillus thermodenitrificans (strain NG80-2).